The chain runs to 881 residues: Nitrate reductase [NADH] 1 (881 aa).

The segment at 1–46 (MAASVEHRPFTSHQHGVVRSFKSYPDVPRPKKLPLPQPLSDSTNDN) is disordered. Residue Cys-167 coordinates Mo-molybdopterin. One can recognise a Cytochrome b5 heme-binding domain in the interval 515-590 (TKSYSLSEVR…LEDYRIGELM (76 aa)). Heme-binding residues include His-550 and His-573. The 113-residue stretch at 625 to 737 (REKIPCKLLS…KGPLGHIEYT (113 aa)) folds into the FAD-binding FR-type domain. FAD-binding positions include 677–680 (RAYT), 694–698 (VVKVY), Phe-699, Phe-706, 711–713 (IMS), and Thr-764.

The protein belongs to the nitrate reductase family. In terms of assembly, homodimer. FAD serves as cofactor. Heme is required as a cofactor. The cofactor is Mo-molybdopterin.

It catalyses the reaction nitrite + NAD(+) + H2O = nitrate + NADH + H(+). Its function is as follows. Nitrate reductase is a key enzyme involved in the first step of nitrate assimilation in plants, fungi and bacteria. The chain is Nitrate reductase [NADH] 1 (NIA1) from Phaseolus vulgaris (Kidney bean).